Here is a 45-residue protein sequence, read N- to C-terminus: Photosystem II reaction center protein K (45 aa).

Positions 1–8 (MNSALFLA) are excised as a propeptide. Residues 23-43 (ILPVIPVFFLLLAFVWQAAIG) form a helical membrane-spanning segment.

The protein belongs to the PsbK family. In terms of assembly, PSII is composed of 1 copy each of membrane proteins PsbA, PsbB, PsbC, PsbD, PsbE, PsbF, PsbH, PsbI, PsbJ, PsbK, PsbL, PsbM, PsbT, PsbX, PsbY, PsbZ, Psb30/Ycf12, at least 3 peripheral proteins of the oxygen-evolving complex and a large number of cofactors. It forms dimeric complexes.

The protein localises to the plastid. It localises to the chloroplast thylakoid membrane. Its function is as follows. One of the components of the core complex of photosystem II (PSII). PSII is a light-driven water:plastoquinone oxidoreductase that uses light energy to abstract electrons from H(2)O, generating O(2) and a proton gradient subsequently used for ATP formation. It consists of a core antenna complex that captures photons, and an electron transfer chain that converts photonic excitation into a charge separation. This chain is Photosystem II reaction center protein K, found in Pyropia yezoensis (Susabi-nori).